Reading from the N-terminus, the 77-residue chain is Putative defensin-like protein 158 (77 aa).

The signal sequence occupies residues 1–24 (MANISWSHFLILMLVFSVVKKGKG). Disulfide bonds link cysteine 31/cysteine 77, cysteine 41/cysteine 60, cysteine 46/cysteine 71, and cysteine 50/cysteine 73.

Belongs to the DEFL family.

It is found in the secreted. This chain is Putative defensin-like protein 158 (LCR23), found in Arabidopsis thaliana (Mouse-ear cress).